An 88-amino-acid polypeptide reads, in one-letter code: Large ribosomal subunit protein bL31B (88 aa).

It belongs to the bacterial ribosomal protein bL31 family. Type B subfamily. Part of the 50S ribosomal subunit.

In Herminiimonas arsenicoxydans, this protein is Large ribosomal subunit protein bL31B.